The chain runs to 219 residues: Interleukin-6 (219 aa).

The N-terminal stretch at 1–20 is a signal peptide; the sequence is MNSSTRYLSLLSALVVLVKG. A disulfide bond links Cys-103 and Cys-111.

Belongs to the IL-6 superfamily. Component of a hexamer of two molecules each of IL6, IL6R and IL6ST; first binds to IL6R to associate with the signaling subunit IL6ST. Expressed in spleen, gill and gastrointestinal tract, ovary and brain. Highest expression in ovary.

The protein resides in the secreted. Functionally, cytokine with a wide variety of biological functions in immunity, tissue regeneration, and metabolism. Binds to IL6R, then the complex associates to the signaling subunit IL6ST/gp130 to trigger the intracellular IL6-signaling pathway. The interaction with the membrane-bound IL6R and IL6ST stimulates 'classic signaling', whereas the binding of IL6 and soluble IL6R to IL6ST stimulates 'trans-signaling'. Alternatively, 'cluster signaling' occurs when membrane-bound IL6:IL6R complexes on transmitter cells activate IL6ST receptors on neighboring receiver cells. In Oncorhynchus mykiss (Rainbow trout), this protein is Interleukin-6 (il6).